A 75-amino-acid chain; its full sequence is MLIPYDALEVDTLTRLIEDFVTRDGTDNGDDTPLETRVLRVRQALTKGQALIVFDPDSEQCQLMLKHDVPKHLFD.

It belongs to the UPF0270 family.

This Pseudomonas fluorescens (strain SBW25) protein is UPF0270 protein PFLU_4323.